A 174-amino-acid polypeptide reads, in one-letter code: Adenine phosphoribosyltransferase (174 aa).

Belongs to the purine/pyrimidine phosphoribosyltransferase family. As to quaternary structure, homodimer.

The protein resides in the cytoplasm. It catalyses the reaction AMP + diphosphate = 5-phospho-alpha-D-ribose 1-diphosphate + adenine. Its pathway is purine metabolism; AMP biosynthesis via salvage pathway; AMP from adenine: step 1/1. Functionally, catalyzes a salvage reaction resulting in the formation of AMP, that is energically less costly than de novo synthesis. The polypeptide is Adenine phosphoribosyltransferase (Nitrosomonas eutropha (strain DSM 101675 / C91 / Nm57)).